The following is a 328-amino-acid chain: Malate dehydrogenase (328 aa).

11-17 (GAAGQIG) is a binding site for NAD(+). Substrate contacts are provided by arginine 92 and arginine 98. NAD(+)-binding positions include asparagine 105, glutamine 112, and 129–131 (VGN). Substrate contacts are provided by asparagine 131 and arginine 162. The Proton acceptor role is filled by histidine 187.

It belongs to the LDH/MDH superfamily. MDH type 2 family.

It catalyses the reaction (S)-malate + NAD(+) = oxaloacetate + NADH + H(+). In terms of biological role, catalyzes the reversible oxidation of malate to oxaloacetate. This is Malate dehydrogenase from Coxiella burnetii (strain CbuK_Q154) (Coxiella burnetii (strain Q154)).